A 202-amino-acid chain; its full sequence is Peptidyl-tRNA hydrolase (202 aa).

Tyrosine 14 contacts tRNA. Residue histidine 19 is the Proton acceptor of the active site. TRNA-binding residues include phenylalanine 64, asparagine 66, and asparagine 112.

It belongs to the PTH family. In terms of assembly, monomer.

Its subcellular location is the cytoplasm. It catalyses the reaction an N-acyl-L-alpha-aminoacyl-tRNA + H2O = an N-acyl-L-amino acid + a tRNA + H(+). Its function is as follows. Hydrolyzes ribosome-free peptidyl-tRNAs (with 1 or more amino acids incorporated), which drop off the ribosome during protein synthesis, or as a result of ribosome stalling. Functionally, catalyzes the release of premature peptidyl moieties from peptidyl-tRNA molecules trapped in stalled 50S ribosomal subunits, and thus maintains levels of free tRNAs and 50S ribosomes. The chain is Peptidyl-tRNA hydrolase from Methylobacterium radiotolerans (strain ATCC 27329 / DSM 1819 / JCM 2831 / NBRC 15690 / NCIMB 10815 / 0-1).